The sequence spans 711 residues: Quinolinate synthase, chloroplastic (711 aa).

The N-terminal 41 residues, 1 to 41 (MDVSSLAAAAPSLVAPPLHHKPHLAFPPHHPSPARGSIGVR), are a transit peptide targeting the chloroplast. The segment at 17–63 (PLHHKPHLAFPPHHPSPARGSIGVRCAHSPSPHPLRPSAATADEEVS) is disordered. The active-site Cysteine persulfide intermediate is the Cys-114. 2 residues coordinate iminosuccinate: His-263 and Ser-289. Position 343 (Cys-343) interacts with [4Fe-4S] cluster. Residues 372–374 (YIN) and Ser-394 each bind iminosuccinate. Residue Cys-467 participates in [4Fe-4S] cluster binding. Residues 493-495 (HFE) and Thr-518 contribute to the iminosuccinate site. Residue Cys-631 coordinates [4Fe-4S] cluster.

It belongs to the quinolinate synthase family. Type 1 subfamily. In terms of assembly, homodimer. [4Fe-4S] cluster is required as a cofactor.

The protein resides in the plastid. It localises to the chloroplast. It catalyses the reaction iminosuccinate + dihydroxyacetone phosphate = quinolinate + phosphate + 2 H2O + H(+). The protein operates within cofactor biosynthesis; NAD(+) biosynthesis; quinolinate from iminoaspartate: step 1/1. Its function is as follows. Catalyzes the condensation of iminoaspartate with dihydroxyacetone phosphate to form quinolinate. This Oryza sativa subsp. japonica (Rice) protein is Quinolinate synthase, chloroplastic.